The sequence spans 231 residues: NADH-ubiquinone oxidoreductase chain 4 (231 aa).

Transmembrane regions (helical) follow at residues proline 1–isoleucine 21, methionine 34–leucine 54, serine 61–isoleucine 80, tryptophan 84–leucine 106, isoleucine 128–proline 148, and threonine 169–leucine 189.

This sequence belongs to the complex I subunit 4 family.

Its subcellular location is the mitochondrion membrane. The catalysed reaction is a ubiquinone + NADH + 5 H(+)(in) = a ubiquinol + NAD(+) + 4 H(+)(out). Its function is as follows. Core subunit of the mitochondrial membrane respiratory chain NADH dehydrogenase (Complex I) that is believed to belong to the minimal assembly required for catalysis. Complex I functions in the transfer of electrons from NADH to the respiratory chain. The immediate electron acceptor for the enzyme is believed to be ubiquinone. The polypeptide is NADH-ubiquinone oxidoreductase chain 4 (MT-ND4) (Atropoides picadoi (Picado's pit viper)).